We begin with the raw amino-acid sequence, 357 residues long: MLLVTLFLFFLQALVNGDSCGSNCEKSERPKRVFNIYWNVPTFMCHQYGLYFDEVTNFNIKHNSKDNFQGDKIAIFYDPGEFPALLPLNYGKYKIRNGGVPQEGNITIHLQRFIEYLDKTYPNRNFSGIGVIDFERWRPIFRQNWGNMKIYKNFSIDLVRKEHPFWNKKMIELEASKRFEKYARLFMEETLKLAKKTRKQADWGYYGYPYCFNMSPTNFVPDCDVTARDENNEMSWLFNNQNVLLPSVYIRRELTPDQRIGLVQGRVKEAVRISNKLKHSPKVFSYWWYVYQDETNTFLTETDVKKTFQEIVINGGDGIIIWGSSSDVNSLSKCTRLREYLLTVLGPIAVNVTEAVN.

The first 26 residues, 1–26, serve as a signal peptide directing secretion; the sequence is MLLVTLFLFFLQALVNGDSCGSNCEK. Intrachain disulfides connect Cys-45-Cys-334 and Cys-211-Cys-223. Asn-105 and Asn-125 each carry an N-linked (GlcNAc...) asparagine glycan. The Proton donor role is filled by Glu-135. The N-linked (GlcNAc...) asparagine glycan is linked to Asn-153. Asn-351 carries N-linked (GlcNAc...) asparagine glycosylation.

Belongs to the glycosyl hydrolase 56 family.

Its subcellular location is the secreted. The catalysed reaction is Random hydrolysis of (1-&gt;4)-linkages between N-acetyl-beta-D-glucosamine and D-glucuronate residues in hyaluronate.. Functionally, hydrolyzes high molecular weight hyaluronic acid to produce small oligosaccharides. The chain is Hyaluronidase from Vespa magnifica (Hornet).